The primary structure comprises 876 residues: Valine--tRNA ligase (876 aa).

The 'HIGH' region signature appears at 44–54 (PNVTGKLHLGH). The short motif at 520–524 (KMSKS) is the 'KMSKS' region element. Position 523 (Lys523) interacts with ATP. A coiled-coil region spans residues 805-876 (LEGLIDMDKE…VKNRIEQLKA (72 aa)).

This sequence belongs to the class-I aminoacyl-tRNA synthetase family. ValS type 1 subfamily. Monomer.

It localises to the cytoplasm. The enzyme catalyses tRNA(Val) + L-valine + ATP = L-valyl-tRNA(Val) + AMP + diphosphate. Functionally, catalyzes the attachment of valine to tRNA(Val). As ValRS can inadvertently accommodate and process structurally similar amino acids such as threonine, to avoid such errors, it has a 'posttransfer' editing activity that hydrolyzes mischarged Thr-tRNA(Val) in a tRNA-dependent manner. The sequence is that of Valine--tRNA ligase from Staphylococcus haemolyticus (strain JCSC1435).